The primary structure comprises 186 residues: ATP synthase subunit delta (186 aa).

Belongs to the ATPase delta chain family. F-type ATPases have 2 components, F(1) - the catalytic core - and F(0) - the membrane proton channel. F(1) has five subunits: alpha(3), beta(3), gamma(1), delta(1), epsilon(1). F(0) has three main subunits: a(1), b(2) and c(10-14). The alpha and beta chains form an alternating ring which encloses part of the gamma chain. F(1) is attached to F(0) by a central stalk formed by the gamma and epsilon chains, while a peripheral stalk is formed by the delta and b chains.

It is found in the cellular chromatophore membrane. F(1)F(0) ATP synthase produces ATP from ADP in the presence of a proton or sodium gradient. F-type ATPases consist of two structural domains, F(1) containing the extramembraneous catalytic core and F(0) containing the membrane proton channel, linked together by a central stalk and a peripheral stalk. During catalysis, ATP synthesis in the catalytic domain of F(1) is coupled via a rotary mechanism of the central stalk subunits to proton translocation. Functionally, this protein is part of the stalk that links CF(0) to CF(1). It either transmits conformational changes from CF(0) to CF(1) or is implicated in proton conduction. This chain is ATP synthase subunit delta, found in Rhodobacter capsulatus (Rhodopseudomonas capsulata).